The following is a 116-amino-acid chain: Large ribosomal subunit protein uL22 (116 aa).

It belongs to the universal ribosomal protein uL22 family. As to quaternary structure, part of the 50S ribosomal subunit.

In terms of biological role, this protein binds specifically to 23S rRNA; its binding is stimulated by other ribosomal proteins, e.g. L4, L17, and L20. It is important during the early stages of 50S assembly. It makes multiple contacts with different domains of the 23S rRNA in the assembled 50S subunit and ribosome. The globular domain of the protein is located near the polypeptide exit tunnel on the outside of the subunit, while an extended beta-hairpin is found that lines the wall of the exit tunnel in the center of the 70S ribosome. The sequence is that of Large ribosomal subunit protein uL22 from Leptospira biflexa serovar Patoc (strain Patoc 1 / Ames).